Consider the following 291-residue polypeptide: MSTASLFSFPSFHLRSLLPSLSSSSSSSSSRFAPPRLSPIRSPAPRTQLSVRAFSAVTMTDSNDAGMDAVQRRLMFEDECILVDENDRVVGHDTKYNCHLMEKIEAENLLHRAFSVFLFNSKYELLLQQRSKTKVTFPLVWTNTCCSHPLYRESELIEENVLGVRNAAQRKLFDELGIVAEDVPVDEFTPLGRMLYKAPSDGKWGEHEVDYLLFIVRDVKLQPNPDEVAEIKYVSREELKELVKKADAGDEAVKLSPWFRLVVDNFLMKWWDHVEKGTITEAADMKTIHKL.

Residues 1-52 constitute a chloroplast transit peptide; that stretch reads MSTASLFSFPSFHLRSLLPSLSSSSSSSSSRFAPPRLSPIRSPAPRTQLSVR. N-acetylthreonine is present on Ser-2. Low complexity predominate over residues 20–39; that stretch reads SLSSSSSSSSSRFAPPRLSP. Residues 20-43 are disordered; it reads SLSSSSSSSSSRFAPPRLSPIRSP. Substrate is bound at residue Lys-95. Positions 99 and 111 each coordinate Mg(2+). In terms of domain architecture, Nudix hydrolase spans 109–261; sequence LLHRAFSVFL…AVKLSPWFRL (153 aa). The substrate site is built by Arg-130 and Lys-134. Cys-146 is a catalytic residue. Ser-147 serves as a coordination point for substrate. A Nudix box motif is present at residues 147–177; the sequence is SHPLYRESELIEENVLGVRNAAQRKLFDELG. 2 residues coordinate Mg(2+): Glu-206 and Glu-208. The active site involves Glu-208.

It belongs to the IPP isomerase type 1 family. The cofactor is Mg(2+).

It localises to the plastid. The protein resides in the chloroplast. It is found in the cytoplasm. The catalysed reaction is isopentenyl diphosphate = dimethylallyl diphosphate. Its pathway is isoprenoid biosynthesis; dimethylallyl diphosphate biosynthesis; dimethylallyl diphosphate from isopentenyl diphosphate: step 1/1. It functions in the pathway porphyrin-containing compound metabolism; chlorophyll biosynthesis. Functionally, catalyzes the 1,3-allylic rearrangement of the homoallylic substrate isopentenyl (IPP) to its highly electrophilic allylic isomer, dimethylallyl diphosphate (DMAPP). The sequence is that of Isopentenyl-diphosphate Delta-isomerase I, chloroplastic (IPP1) from Arabidopsis thaliana (Mouse-ear cress).